The following is a 153-amino-acid chain: 3-hydroxyacyl-[acyl-carrier-protein] dehydratase FabZ (153 aa).

Residue His-54 is part of the active site.

This sequence belongs to the thioester dehydratase family. FabZ subfamily.

The protein localises to the cytoplasm. It catalyses the reaction a (3R)-hydroxyacyl-[ACP] = a (2E)-enoyl-[ACP] + H2O. Its function is as follows. Involved in unsaturated fatty acids biosynthesis. Catalyzes the dehydration of short chain beta-hydroxyacyl-ACPs and long chain saturated and unsaturated beta-hydroxyacyl-ACPs. This Chlamydia trachomatis serovar L2 (strain ATCC VR-902B / DSM 19102 / 434/Bu) protein is 3-hydroxyacyl-[acyl-carrier-protein] dehydratase FabZ.